Reading from the N-terminus, the 620-residue chain is Chaperone protein HscA homolog (620 aa).

The protein belongs to the heat shock protein 70 family.

Chaperone involved in the maturation of iron-sulfur cluster-containing proteins. Has a low intrinsic ATPase activity which is markedly stimulated by HscB. The sequence is that of Chaperone protein HscA homolog from Shewanella piezotolerans (strain WP3 / JCM 13877).